The chain runs to 2169 residues: Voltage-dependent L-type calcium channel subunit alpha-1C (2169 aa).

The Cytoplasmic segment spans residues 1 to 153 (MVPLVQPTTP…RACISIVEWK (153 aa)). Residues 76–97 (GAALSWQAAIDAGRQAKLMGSA) form a calmodulin-binding region. Residues 98–108 (GNTTISTVSST) show a composition bias toward polar residues. A disordered region spans residues 98 to 127 (GNTTISTVSSTQRKRQQYGKPKKQSGTTAT). Basic residues predominate over residues 109-120 (QRKRQQYGKPKK). The stretch at 140–437 (NPIRRACISI…LVLGVLSGEF (298 aa)) is one I repeat. Residues 154–172 (PFEIIILLTIFANCVALAI) form a helical membrane-spanning segment. At 173–187 (YIPFPEDDSNATNSN) the chain is on the extracellular side. Asn-182 is a glycosylation site (N-linked (GlcNAc...) asparagine). Residues 188–208 (LERVEYLFLIIFTVEAFLKVI) form a helical membrane-spanning segment. Topologically, residues 209–217 (AYGLLFHPN) are cytoplasmic. Residues 218 to 238 (AYLRNGWNLLDFIIVVVGLFS) traverse the membrane as a helical segment. Residues 239–261 (AILEQATKADGANALGGKGAGFD) are Extracellular-facing. The helical transmembrane segment at 262 to 280 (VKALRAFRVLRPLRLVSGV) threads the bilayer. The Cytoplasmic segment spans residues 281–297 (PSLQVVLNSIIKAMVPL). A helical transmembrane segment spans residues 298–319 (LHTALLVLFVIIIYAIIGLELF). Over 320 to 379 (MGKMHKTCYNQEGITDVPAEEDPSPCALESGHGRQCQNGTVCKPGWDGPKHGITNFDNFA) the chain is Extracellular. Cysteines 345 and 361 form a disulfide. N-linked (GlcNAc...) asparagine glycosylation is present at Asn-357. Residues 380–401 (FAMLTVFQCITMEGWTDVLYWM) constitute an intramembrane region (pore-forming). Residues 390–393 (TMEG) carry the Selectivity filter of repeat I motif. Glu-392 lines the Ca(2+) pocket. Over 402–409 (QDAMGYEL) the chain is Extracellular. A helical transmembrane segment spans residues 410-430 (PWVYFVSLVIFGSFFVLNLVL). The Cytoplasmic portion of the chain corresponds to 431–553 (GVLSGEFSKE…RKCRAAVKSN (123 aa)). The interval 457–474 (QQLEEDLKGYLDWITQAE) is AID/alpha-interaction domain; mediates interaction with the beta subunit. The tract at residues 478–510 (PENEDEGVDEEKPRNMSMPTSETESVNTENVAG) is disordered. The segment covering 494 to 507 (SMPTSETESVNTEN) has biased composition (polar residues). Ser-498 is subject to Phosphoserine. The residue at position 505 (Thr-505) is a Phosphothreonine. One copy of the II repeat lies at 539 to 785 (NRFCRRKCRA…VFLAIAVDNL (247 aa)). Residues 554–572 (VFYWLVIFLVFLNTLTIAS) form a helical membrane-spanning segment. Residues 573–583 (EHYNQPHWLTE) lie on the Extracellular side of the membrane. The chain crosses the membrane as a helical span at residues 584–604 (VQDTANKALLALFTAEMLLKM). Residues 605 to 615 (YSLGLQAYFVS) lie on the Cytoplasmic side of the membrane. The chain crosses the membrane as a helical span at residues 616 to 635 (LFNRLDCFIVCGGILETILV). At 636–644 (ETKIMSPLG) the chain is on the extracellular side. A helical transmembrane segment spans residues 645-663 (ISVLRCVRLLRIFKITRYW). Residues 664 to 682 (NSLSNLVASLLNSVRSIAS) are Cytoplasmic-facing. Residues 683 to 702 (LLLLLFLFIIIFSLLGMQLF) traverse the membrane as a helical segment. Topologically, residues 703–722 (GGKFNFDEMRTRRSTFDNFP) are extracellular. The segment at residues 723 to 744 (QSLLTVFQILTGEDWNSVMYDG) is an intramembrane region (pore-forming). Residues 733 to 736 (TGED) carry the Selectivity filter of repeat II motif. Position 735 (Glu-735) interacts with Ca(2+). Residues 745-754 (IMAYGGPSFP) are Extracellular-facing. A helical transmembrane segment spans residues 755-774 (GMLVCIYFIILFICGNYILL). Over 775–929 (NVFLAIAVDN…LQCHRIVNDT (155 aa)) the chain is Cytoplasmic. The interval 793 to 890 (SAQKEEEEEK…EMPVGPRPRP (98 aa)) is disordered. A compositionally biased stretch (basic and acidic residues) spans 812–835 (SPEKKQEVVEKPAVEETKEEKIEL). Ser-837 and Ser-844 each carry phosphoserine. The segment at 858 to 905 (NENEDKSPYPNPDAAGEEDEEEPEMPVGPRPRPLSELHLKEKAVPMPE) is interaction with STAC2. Positions 872 to 881 (AGEEDEEEPE) are enriched in acidic residues. Residues 916 to 1198 (NRFRLQCHRI…IFVGFVIVTF (283 aa)) form an III repeat. A helical membrane pass occupies residues 930–948 (IFTNLILFFILLSSISLAA). Residues 949–960 (EDPVQHTSFRNH) are Extracellular-facing. A helical membrane pass occupies residues 961–980 (ILFYFDIVFTTIFTIEIALK). The Cytoplasmic portion of the chain corresponds to 981–996 (MTAYGAFLHKGSFCRN). A helical membrane pass occupies residues 997–1015 (YFNILDLLVVSVSLISFGI). At 1016–1022 (QSSAINV) the chain is on the extracellular side. Residues 1023 to 1041 (VKILRVLRVLRPLRAINRA) traverse the membrane as a helical segment. The Cytoplasmic segment spans residues 1042-1060 (KGLKHVVQCVFVAIRTIGN). The helical transmembrane segment at 1061-1080 (IVIVTTLLQFMFACIGVQLF) threads the bilayer. The Extracellular portion of the chain corresponds to 1081-1130 (KGKLYTCSDSSKQTEAECKGNYITYKDGEVDQPIIQPRSWENSKFDFDNV). Cys-1087 and Cys-1098 are joined by a disulfide. Positions 1118 to 1207 (RSWENSKFDF…FQEQGEQEYK (90 aa)) are dihydropyridine binding. The pore-forming intramembrane region spans 1131–1151 (LAAMMALFTVSTFEGWPELLY). Residues 1142 to 1145 (TFEG) carry the Selectivity filter of repeat III motif. Ca(2+) is bound at residue Glu-1144. At 1152 to 1168 (RSIDSHTEDKGPIYNYR) the chain is on the extracellular side. Residues 1169–1190 (VEISIFFIIYIIIIAFFMMNIF) form a helical membrane-spanning segment. Residues 1191 to 1248 (VGFVIVTFQEQGEQEYKNCELDKNQRQCVEYALKARPLRRYIPKNQHQYKVWYVVNST) are Cytoplasmic-facing. The IV repeat unit spans residues 1235 to 1508 (NQHQYKVWYV…LFVAVVMDNF (274 aa)). A helical transmembrane segment spans residues 1249–1270 (YFEYLMFVLILLNTICLAMQHY). The Extracellular portion of the chain corresponds to 1271–1278 (GQSCLFKI). The helical transmembrane segment at 1279-1300 (AMNILNMLFTGLFTVEMILKLI) threads the bilayer. The Cytoplasmic segment spans residues 1301–1310 (AFKPKHYFCD). A helical membrane pass occupies residues 1311 to 1330 (AWNTFDALIVVGSIVDIAIT). Residues 1331 to 1353 (EVNPAEHTQCSPSMNAEENSRIS) are Extracellular-facing. Residues 1354-1372 (ITFFRLFRVMRLVKLLSRG) form a helical membrane-spanning segment. The Cytoplasmic portion of the chain corresponds to 1373 to 1390 (EGIRTLLWTFIKSFQALP). The helical transmembrane segment at 1391–1411 (YVALLIVMLFFIYAVIGMQVF) threads the bilayer. At 1412-1433 (GKIALNDTTEINRNNNFQTFPQ) the chain is on the extracellular side. Asn-1417 carries an N-linked (GlcNAc...) asparagine glycan. The pore-forming intramembrane region spans 1434 to 1452 (AVLLLFRCATGEAWQDIML). Residues 1443–1446 (TGEA) carry the Selectivity filter of repeat IV motif. Residues 1453 to 1480 (ACMPGKKCAPESDPSNSTEGETPCGSSF) are Extracellular-facing. The segment at 1459 to 1527 (KCAPESDPSN…LGPHHLDEFK (69 aa)) is dihydropyridine binding. Cys-1460 and Cys-1476 are disulfide-bonded. Asn-1468 carries an N-linked (GlcNAc...) asparagine glycan. The phenylalkylamine binding stretch occupies residues 1473–1515 (ETPCGSSFAVFYFISFYMLCAFLIINLFVAVVMDNFDYLTRDW). Residues 1481-1505 (AVFYFISFYMLCAFLIINLFVAVVM) form a helical membrane-spanning segment. Topologically, residues 1506–2169 (DNFDYLTRDW…ADSRVHVRSL (664 aa)) are cytoplasmic. An important for interaction with STAC1, STAC2 and STAC3 region spans residues 1640-1667 (DEVTVGKFYATFLIQEYFRKFKKRKEQG). The interval 1646–1666 (KFYATFLIQEYFRKFKKRKEQ) is calmodulin-binding IQ region. The important for localization in at the junctional membrane stretch occupies residues 1680–1699 (LQAGLRTLHDIGPEIRRAIS). Ser-1699 and Ser-1720 each carry phosphoserine. 2 disordered regions span residues 1761–1793 (KAGN…TGSN) and 1894–1920 (ENRQ…LRSA). A compositionally biased stretch (polar residues) spans 1780–1792 (STFTPSSYSSTGS). A compositionally biased stretch (basic and acidic residues) spans 1894-1910 (ENRQLTPPEEDKGDTRP). Ser-1927 carries the post-translational modification Phosphoserine.

It belongs to the calcium channel alpha-1 subunit (TC 1.A.1.11) family. CACNA1C subfamily. As to quaternary structure, component of a calcium channel complex consisting of a pore-forming alpha subunit (CACNA1C) and ancillary beta, gamma and delta subunits. The channel complex contains alpha, beta, gamma and delta subunits in a 1:1:1:1 ratio, i.e. it contains only one of each type of subunit. CACNA1C channel activity is modulated by ancillary subunits, such as CACNB1, CACNB2, CACNB3, CACNA2D1 and CACNA2D4. Interacts with CACNB1. Interacts with CACNB2. Identified in a complex with CACNA2D4 and CACNB3. Interacts with CACNB3. Interacts with CACNA2D1. Interacts with CACNA2D4. Interacts with the gamma subunits CACNG4, CACNG6, CACNG7 and CACNG8. Interacts with CALM1. Interacts (via the N-terminus and the C-terminal C and IQ motifs) with CABP1; this inhibits Ca(2+)-dependent channel inactivation. The binding via the C motif is calcium independent whereas the binding via IQ requires the presence of calcium and is mutually exclusive with calmodulin binding. The binding to the cytoplasmic N-terminal domain is calcium independent but is essential for the channel modulation. Interacts (via C-terminal CDB motif) with CABP5; in a calcium-dependent manner. Interacts with CIB1; the interaction increases upon cardiomyocytes hypertrophy. Interacts with STAC2 and STAC3; this inhibits channel inactivation. Phosphorylation by PKA at Ser-1927 activates the channel. Elevated levels of blood glucose lead to increased phosphorylation by PKA. In terms of tissue distribution, expressed in heart. Expressed in uterus.

The protein resides in the cell membrane. It localises to the sarcolemma. It is found in the perikaryon. Its subcellular location is the postsynaptic density membrane. The protein localises to the cell projection. The protein resides in the dendrite. It localises to the T-tubule. The catalysed reaction is Ca(2+)(in) = Ca(2+)(out). With respect to regulation, inhibited by dihydropyridines (DHP), such as isradipine. Inhibited by nifedipine. Channel activity is regulated by Ca(2+) and calmodulin. Binding of STAC1, STAC2 or STAC3 to a region that overlaps with the calmodulin binding site inhibits channel inactivation by Ca(2+) and calmodulin. Binding of calmodulin or CABP1 at the same regulatory sites results in opposite effects on the channel function. Shear stress and pressure increases calcium channel activity. In terms of biological role, pore-forming, alpha-1C subunit of the voltage-gated calcium channel that gives rise to L-type calcium currents. Mediates influx of calcium ions into the cytoplasm, and thereby triggers calcium release from the sarcoplasm. Plays an important role in excitation-contraction coupling in the heart. Required for normal heart development and normal regulation of heart rhythm. Required for normal contraction of smooth muscle cells in blood vessels and in the intestine. Essential for normal blood pressure regulation via its role in the contraction of arterial smooth muscle cells. Long-lasting (L-type) calcium channels belong to the 'high-voltage activated' (HVA) group. The protein is Voltage-dependent L-type calcium channel subunit alpha-1C (CACNA1C) of Cavia porcellus (Guinea pig).